The sequence spans 637 residues: Extracellular metalloproteinase MEP (637 aa).

The first 21 residues, 1–21 (MRSVDSLLLLGLTGLASQANA), serve as a signal peptide directing secretion. Residues 22-246 (HPAKRQPNDS…VVGVVDYVAD (225 aa)) constitute a propeptide that is removed on maturation. A glycan (N-linked (GlcNAc...) asparagine) is linked at asparagine 288. Histidine 431 is a Zn(2+) binding site. Glutamate 432 is a catalytic residue. Residue histidine 435 coordinates Zn(2+).

This sequence belongs to the peptidase M36 family. Zn(2+) serves as cofactor.

The protein localises to the secreted. Secreted metalloproteinase that probably acts as a virulence factor. Cleaves Z.mays Endochitinase A (CHIA) between residues 'Gly-29' and 'Cys-30'. The protein is Extracellular metalloproteinase MEP (MEP) of Fusarium vanettenii (strain ATCC MYA-4622 / CBS 123669 / FGSC 9596 / NRRL 45880 / 77-13-4) (Fusarium solani subsp. pisi).